Reading from the N-terminus, the 1068-residue chain is Focal adhesion kinase 1 (1068 aa).

The interval 1–26 (MAAAYLDPNLNHNPSTNAKSRLSTGM) is disordered. The span at 10-23 (LNHNPSTNAKSRLS) shows a compositional bias: polar residues. The 321-residue stretch at 35 to 355 (RVLRVFHYFE…GYCRLVSGAS (321 aa)) folds into the FERM domain. Phosphotyrosine is present on residues Tyr-403 and Tyr-413. One can recognise a Protein kinase domain in the interval 435–693 (IELGRCIGEG…ELKAQLSTIL (259 aa)). ATP is bound by residues 441-447 (IGEGQFG), Lys-467, and 513-515 (ELC). Catalysis depends on Asp-559, which acts as the Proton acceptor. Tyr-589 and Tyr-590 each carry phosphotyrosine; by autocatalysis. The segment covering 699-710 (QQEERMRMESRR) has biased composition (basic and acidic residues). Disordered regions lie at residues 699–750 (QQEE…QHMM) and 869–912 (GNQH…DGYN). A phosphotyrosine mark is found at Tyr-874 and Tyr-941.

This sequence belongs to the protein kinase superfamily. Tyr protein kinase family. FAK subfamily. Post-translationally, phosphorylated on tyrosine residues; phosphorylated kinase is first detected during gastrulation, suggesting that tyrosine phosphorylation is developmentally regulated.

It is found in the cell junction. The protein resides in the focal adhesion. Its subcellular location is the cell membrane. The protein localises to the cytoplasm. It localises to the cytoskeleton. It is found in the cilium basal body. It carries out the reaction L-tyrosyl-[protein] + ATP = O-phospho-L-tyrosyl-[protein] + ADP + H(+). Its function is as follows. Non-receptor protein-tyrosine kinase implicated in signaling pathways involved in cell motility, proliferation and apoptosis. Activated by tyrosine-phosphorylation in response to either integrin clustering induced by cell adhesion or antibody cross-linking, or via G-protein coupled receptor (GPCR) occupancy by ligands such as bombesin or lysophosphatidic acid, or via LDL receptor occupancy. Microtubule-induced dephosphorylation at Tyr-397 is crucial for the induction of focal adhesion disassembly. This chain is Focal adhesion kinase 1 (ptk2), found in Xenopus laevis (African clawed frog).